A 264-amino-acid chain; its full sequence is tRNA (guanine-N(1)-)-methyltransferase (264 aa).

Residues glycine 125 and 145–150 (LGDFVL) each bind S-adenosyl-L-methionine.

The protein belongs to the RNA methyltransferase TrmD family. Homodimer.

It localises to the cytoplasm. The enzyme catalyses guanosine(37) in tRNA + S-adenosyl-L-methionine = N(1)-methylguanosine(37) in tRNA + S-adenosyl-L-homocysteine + H(+). Functionally, specifically methylates guanosine-37 in various tRNAs. The chain is tRNA (guanine-N(1)-)-methyltransferase from Burkholderia mallei (strain NCTC 10247).